Consider the following 140-residue polypeptide: Phospholipase A2 (140 aa).

An N-terminal signal peptide occupies residues 1–21 (MNPAHLLVLAAVCISLSGASS). Positions 22–27 (IAPQPL) are excised as a propeptide. Intrachain disulfides connect Cys38–Cys97, Cys52–Cys139, Cys54–Cys70, Cys69–Cys125, Cys76–Cys118, Cys86–Cys111, and Cys104–Cys116. Asn39 carries an N-linked (GlcNAc...) asparagine glycan. Residues Tyr53, Gly55, and Gly57 each coordinate Ca(2+). Residue His73 is part of the active site. Asp74 is a Ca(2+) binding site. The N-linked (GlcNAc...) asparagine glycan is linked to Asn107. Asp119 is an active-site residue.

It belongs to the phospholipase A2 family. Group I subfamily. D49 sub-subfamily. The cofactor is Ca(2+). As to expression, expressed by the venom gland.

It localises to the secreted. The enzyme catalyses a 1,2-diacyl-sn-glycero-3-phosphocholine + H2O = a 1-acyl-sn-glycero-3-phosphocholine + a fatty acid + H(+). PLA2 catalyzes the calcium-dependent hydrolysis of the 2-acyl groups in 3-sn-phosphoglycerides. The sequence is that of Phospholipase A2 from Micrurus altirostris (Uruguayan coral snake).